The following is a 175-amino-acid chain: MGRTLENKQQIVGELKGLLAETELALVLDFKGLSIKEMSDLRDRLRVTNSVCKVTKNTLMRRAIDGDSSWANLDSLLTGTNAFVLVKGDVGAGVKAVRSFQNEFKKSETKGALFEGKLLSQDEIKAIADLPSREELMAQIAGAINAVATKVAVGINEVPTGMARALKQHAEGGDS.

It belongs to the universal ribosomal protein uL10 family. As to quaternary structure, part of the ribosomal stalk of the 50S ribosomal subunit. The N-terminus interacts with L11 and the large rRNA to form the base of the stalk. The C-terminus forms an elongated spine to which L12 dimers bind in a sequential fashion forming a multimeric L10(L12)X complex.

Functionally, forms part of the ribosomal stalk, playing a central role in the interaction of the ribosome with GTP-bound translation factors. The chain is Large ribosomal subunit protein uL10 from Synechococcus sp. (strain CC9902).